Reading from the N-terminus, the 268-residue chain is Small ribosomal subunit protein uS3 (268 aa).

One can recognise a KH type-2 domain in the interval 38-106 (IRKLLATGME…QVQLNILEVK (69 aa)). The tract at residues 218–268 (VAAPAGDRPRRERPSRPRRSGATGTTATSTEAGRAATATADAPATTEQKEG) is disordered. Residues 237–268 (SGATGTTATSTEAGRAATATADAPATTEQKEG) are compositionally biased toward low complexity.

It belongs to the universal ribosomal protein uS3 family. As to quaternary structure, part of the 30S ribosomal subunit. Forms a tight complex with proteins S10 and S14.

Its function is as follows. Binds the lower part of the 30S subunit head. Binds mRNA in the 70S ribosome, positioning it for translation. The protein is Small ribosomal subunit protein uS3 of Rhodococcus jostii (strain RHA1).